The sequence spans 208 residues: Ribonuclease HII (208 aa).

The RNase H type-2 domain maps to 13 to 202 (DLVAGVDEVG…VRQAYEAREA (190 aa)). A divalent metal cation is bound by residues aspartate 19, glutamate 20, and aspartate 111.

Belongs to the RNase HII family. Mn(2+) is required as a cofactor. The cofactor is Mg(2+).

It localises to the cytoplasm. It catalyses the reaction Endonucleolytic cleavage to 5'-phosphomonoester.. Its function is as follows. Endonuclease that specifically degrades the RNA of RNA-DNA hybrids. The protein is Ribonuclease HII of Pseudomonas fluorescens (strain ATCC BAA-477 / NRRL B-23932 / Pf-5).